The chain runs to 155 residues: V-type proton ATPase 16 kDa proteolipid subunit c (155 aa).

Residues 1 to 10 (MSESKSGPEY) lie on the Lumenal side of the membrane. Residues 11-33 (ASFFAVMGASAAMVFSALGAAYG) traverse the membrane as a helical segment. The Cytoplasmic segment spans residues 34 to 55 (TAKSGTGIAAMSVMRPEQIMKS). The chain crosses the membrane as a helical span at residues 56 to 76 (IIPVVMAGIIAIYGLVVAVLI). The Lumenal segment spans residues 77 to 92 (ANSLNDDISLYKSFLQ). The chain crosses the membrane as a helical span at residues 93–114 (LGAGLSVGLSGLAAGFAIGIVG). The Cytoplasmic portion of the chain corresponds to 115–131 (DAGVRGTAQQPRLFVGM). Residues 132-152 (ILILIFAEVLGLYGLIVALIL) form a helical membrane-spanning segment. Over 153–155 (STK) the chain is Lumenal.

Belongs to the V-ATPase proteolipid subunit family. V-ATPase is a heteromultimeric enzyme made up of two complexes: the ATP-hydrolytic V1 complex and the proton translocation V0 complex. The V1 complex consists of three catalytic AB heterodimers that form a heterohexamer, three peripheral stalks each consisting of EG heterodimers, one central rotor including subunits D and F, and the regulatory subunits C and H. The proton translocation complex V0 consists of the proton transport subunit a, a ring of proteolipid subunits c9c'', rotary subunit d, subunits e and f, and the accessory subunits ATP6AP1/Ac45 and ATP6AP2/PRR. Interacts with the V0 complex V-ATPase subunit a4 ATP6V0A4. Interacts with LASS2. Interacts with RNF182; this interaction leads to ubiquitination and degradation via the proteasome pathway. As to quaternary structure, (Microbial infection) Interacts with HTLV-1 accessory protein p12I. In terms of processing, ubiquitinated by RNF182, leading to its degradation via the ubiquitin-proteasome pathway.

The protein localises to the cytoplasmic vesicle. It localises to the clathrin-coated vesicle membrane. It is found in the secretory vesicle. The protein resides in the synaptic vesicle membrane. In terms of biological role, proton-conducting pore forming subunit of the V0 complex of vacuolar(H+)-ATPase (V-ATPase), a multisubunit enzyme composed of a peripheral complex (V1) that hydrolyzes ATP and a membrane integral complex (V0) that translocates protons. V-ATPase is responsible for acidifying and maintaining the pH of intracellular compartments, and in some cell types, it is targeted to the plasma membrane, where it is responsible for acidifying the extracellular environment. This is V-type proton ATPase 16 kDa proteolipid subunit c (ATP6V0C) from Homo sapiens (Human).